The primary structure comprises 572 residues: Probable transporter MCH1 (572 aa).

Positions 1 to 29 are enriched in polar residues; it reads MSSSAPDDTQASRLDADQISTRSSSYASD. Residues 1 to 39 form a disordered region; it reads MSSSAPDDTQASRLDADQISTRSSSYASDNDTDSTETRI. N-linked (GlcNAc...) asparagine glycosylation occurs at N30. 10 helical membrane-spanning segments follow: residues 50–70, 89–109, 116–136, 159–179, 193–213, 232–252, 335–355, 426–446, 459–479, and 488–508; these read LLAFISANIIALACGSIVVFS, AVAISGSVALYLPISGVGYIC, PLALTGGILFGSGYGLAAGVY, FLMLSFVFVGVATCCLYMAAV, GLALATPITCFGLSPMWLSQA, VFRFFLFLAALTFFMGILGTF, LAFLLIVGPGEAFINNLGTII, FMAFFASMLSIGLLILASGLV, LVGAGYGAIFSLTPLMVTIIW, and YGLIGMLPAAGSTFWGLVYSA. N515 carries an N-linked (GlcNAc...) asparagine glycan. Residues 539–559 form a helical membrane-spanning segment; it reads PTYWAETITVWIAVGLLLWAW.

It belongs to the major facilitator superfamily.

The protein resides in the vacuole membrane. In terms of biological role, probable transporter. This Gibberella zeae (strain ATCC MYA-4620 / CBS 123657 / FGSC 9075 / NRRL 31084 / PH-1) (Wheat head blight fungus) protein is Probable transporter MCH1 (MCH1).